We begin with the raw amino-acid sequence, 200 residues long: Recombination protein RecR (200 aa).

A C4-type zinc finger spans residues 57 to 72 (CQHCRTFTENSLCDIC). The region spanning 81–176 (GQLCIVETPA…NITRIAHGVP (96 aa)) is the Toprim domain.

It belongs to the RecR family.

May play a role in DNA repair. It seems to be involved in an RecBC-independent recombinational process of DNA repair. It may act with RecF and RecO. The polypeptide is Recombination protein RecR (Tolumonas auensis (strain DSM 9187 / NBRC 110442 / TA 4)).